The primary structure comprises 372 residues: Ligninase C (372 aa).

A signal peptide spans 1–26 (MAFKSLLSFVSVIGALQGANAALTRR). Histidine 74 functions as the Proton acceptor in the catalytic mechanism. Positions 75, 93, 95, and 97 each coordinate Ca(2+). Asparagine 129 carries an N-linked (GlcNAc...) asparagine glycan. Residue histidine 205 participates in heme b binding. The Ca(2+) site is built by threonine 206, aspartate 223, threonine 225, leucine 228, and aspartate 230. A disordered region spans residues 346–372 (TPFPTFPTDPGPKTAVAPVPKPPAARK).

Belongs to the peroxidase family. Ligninase subfamily. It depends on Ca(2+) as a cofactor. Requires heme b as cofactor.

It carries out the reaction 1-(3,4-dimethoxyphenyl)-2-(2-methoxyphenoxy)propane-1,3-diol + H2O2 = 3,4-dimethoxybenzaldehyde + guaiacol + glycolaldehyde + H2O. The enzyme catalyses 2 (3,4-dimethoxyphenyl)methanol + H2O2 = 2 (3,4-dimethoxyphenyl)methanol radical + 2 H2O. It functions in the pathway secondary metabolite metabolism; lignin degradation. In terms of biological role, depolymerization of lignin. Catalyzes the C(alpha)-C(beta) cleavage of the propyl side chains of lignin. The chain is Ligninase C from Trametes versicolor (White-rot fungus).